Reading from the N-terminus, the 378-residue chain is IDS-type sesquiterpene synthase (378 aa).

2 residues coordinate Mg(2+): Asp120 and Asp124. Residues 120–124 (DDYVD) carry the DDXXD motif motif.

This sequence belongs to the terpene synthase family. Mg(2+) is required as a cofactor. As to expression, highly expressed in male epidermal tissue associated with the cuticle of ventral sternites.

The enzyme catalyses (2Z,6E)-farnesyl diphosphate = (Z)-alpha-bisabolene + diphosphate. Its pathway is pheromone biosynthesis. In terms of biological role, sesquiterpene alcohol synthase that catalyzes the formation of the pheromone precursor (Z)-alpha-bisabolene from (2Z,6E)-farnesyl diphosphate. The chain is IDS-type sesquiterpene synthase from Nezara viridula (Southern green stink bug).